The chain runs to 253 residues: 5'/3'-nucleotidase SurE (253 aa).

A divalent metal cation contacts are provided by D8, D9, S39, and N92.

This sequence belongs to the SurE nucleotidase family. The cofactor is a divalent metal cation.

The protein localises to the cytoplasm. It carries out the reaction a ribonucleoside 5'-phosphate + H2O = a ribonucleoside + phosphate. It catalyses the reaction a ribonucleoside 3'-phosphate + H2O = a ribonucleoside + phosphate. The enzyme catalyses [phosphate](n) + H2O = [phosphate](n-1) + phosphate + H(+). Its function is as follows. Nucleotidase with a broad substrate specificity as it can dephosphorylate various ribo- and deoxyribonucleoside 5'-monophosphates and ribonucleoside 3'-monophosphates with highest affinity to 3'-AMP. Also hydrolyzes polyphosphate (exopolyphosphatase activity) with the preference for short-chain-length substrates (P20-25). Might be involved in the regulation of dNTP and NTP pools, and in the turnover of 3'-mononucleotides produced by numerous intracellular RNases (T1, T2, and F) during the degradation of various RNAs. This chain is 5'/3'-nucleotidase SurE, found in Escherichia coli O127:H6 (strain E2348/69 / EPEC).